A 438-amino-acid polypeptide reads, in one-letter code: Glutamate-1-semialdehyde 2,1-aminomutase (438 aa).

An N6-(pyridoxal phosphate)lysine modification is found at Lys278.

This sequence belongs to the class-III pyridoxal-phosphate-dependent aminotransferase family. HemL subfamily. In terms of assembly, homodimer. Pyridoxal 5'-phosphate is required as a cofactor.

Its subcellular location is the cytoplasm. It carries out the reaction (S)-4-amino-5-oxopentanoate = 5-aminolevulinate. Its pathway is porphyrin-containing compound metabolism; protoporphyrin-IX biosynthesis; 5-aminolevulinate from L-glutamyl-tRNA(Glu): step 2/2. This Delftia acidovorans (strain DSM 14801 / SPH-1) protein is Glutamate-1-semialdehyde 2,1-aminomutase.